The following is a 282-amino-acid chain: Phosphoglycerate mutase-like protein 1 (282 aa).

Histidine 23 serves as the catalytic Tele-phosphohistidine intermediate. Glutamate 135 serves as the catalytic Proton donor/acceptor.

Belongs to the phosphoglycerate mutase family.

Functionally, may play a role in carbohydrates metabolism. In Arabidopsis thaliana (Mouse-ear cress), this protein is Phosphoglycerate mutase-like protein 1.